Reading from the N-terminus, the 97-residue chain is Co-chaperonin GroES (97 aa).

Belongs to the GroES chaperonin family. As to quaternary structure, heptamer of 7 subunits arranged in a ring. Interacts with the chaperonin GroEL.

The protein localises to the cytoplasm. Functionally, together with the chaperonin GroEL, plays an essential role in assisting protein folding. The GroEL-GroES system forms a nano-cage that allows encapsulation of the non-native substrate proteins and provides a physical environment optimized to promote and accelerate protein folding. GroES binds to the apical surface of the GroEL ring, thereby capping the opening of the GroEL channel. The polypeptide is Co-chaperonin GroES (Ectopseudomonas mendocina (strain ymp) (Pseudomonas mendocina)).